We begin with the raw amino-acid sequence, 494 residues long: Cytochrome P450 monooxygenase ccsD (494 aa).

Residues 5-25 (ISPRTLVLLAVTCSLLVLYFS) traverse the membrane as a helical segment. Cys-438 is a heme binding site. Residues Asn-445 and Asn-477 are each glycosylated (N-linked (GlcNAc...) asparagine).

The protein belongs to the cytochrome P450 family. Requires heme as cofactor.

The protein localises to the membrane. It functions in the pathway mycotoxin biosynthesis. Functionally, cytochrome P450 monooxygenase; part of the gene cluster that mediates the biosynthesis of a family of the mycotoxins cytochalasins E and K. The hybrid PKS-NRPS synthetase ccsA and the enoyl reductase ccsC are responsible for fusion of phenylalanine with an octaketide backbone and subsequent release of the stable tetramic acid precursor. The polyketide synthase module (PKS) of the PKS-NRPS ccsA is responsible for the synthesis of the octaketide backbone. The downstream nonribosomal peptide synthetase (NRPS) amidates the carboxyl end of the octaketide with a phenylalanine. A reductase-like domain (R) at the C-terminus catalyzes the reductive release of the polyketide-amino acid intermediate. Because ccsA lacks a designated enoylreductase (ER) domain, the required activity is provided the enoyl reductase ccsC. Upon formation of the 11-membered carbocycle-fused perhydroisoindolone intermediate, a number of oxidative steps are required to afford the final cytochalasin E and K, including two hydroxylations at C17 and C18, one alcohol oxidation at C17, one epoxidation at C6 and C7 and two Baeyer-Villiger oxidations. The oxidative modification at C17, C18 and the C6-C7 epoxidation are likely to be catalyzed by the two cytochrome P450 oxygenases ccsD and ccsG. CcsD may be responsible for the epoxidation of the C6-C7 double bond. CcsG may be responsible for the successive oxidative modifications at C17 and C18. The double Baeyer-Villiger oxidations of ketocytochalasin to precytochalasin and cytochalasin Z(16) are among the final steps leading to cytochalasin E and K and are catalyzed by ccsB. The first oxygen insertion step follows that of the classic BVMO mechanism, generating the ester precytochalasin. Release of precytochalasin into an aqueous environment can generate the shunt product iso-precytochalasin through spontaneous isomerization. Alternatively, precytochalasin can undergo further oxidation by ccsB to yield the in-line carbonate-containing cytochalasin Z(16). Cytochalasin Z(16) is a precursor to cytochalasin E and cytochalasin K, whereas iso-precytochalasin is a precursor to cytochalasin Z(17) and rosellichalasin. The hydrolyase ccsE may catalyze hydrolysis of epoxide bond in cytochalasin E to afford cytochalasin K. The function of ccsF has not been assigned but it may play a role in post-PKS-NRPS biosynthetic step, resistance or transport of cytochalasins and related PKS-NRPS products. The sequence is that of Cytochrome P450 monooxygenase ccsD from Aspergillus clavatus (strain ATCC 1007 / CBS 513.65 / DSM 816 / NCTC 3887 / NRRL 1 / QM 1276 / 107).